The chain runs to 216 residues: Nucleoside triphosphate pyrophosphatase (216 aa).

Catalysis depends on D82, which acts as the Proton acceptor.

The protein belongs to the Maf family. The cofactor is a divalent metal cation.

Its subcellular location is the cytoplasm. The catalysed reaction is a ribonucleoside 5'-triphosphate + H2O = a ribonucleoside 5'-phosphate + diphosphate + H(+). The enzyme catalyses a 2'-deoxyribonucleoside 5'-triphosphate + H2O = a 2'-deoxyribonucleoside 5'-phosphate + diphosphate + H(+). Nucleoside triphosphate pyrophosphatase. May have a dual role in cell division arrest and in preventing the incorporation of modified nucleotides into cellular nucleic acids. The polypeptide is Nucleoside triphosphate pyrophosphatase (Mycobacterium marinum (strain ATCC BAA-535 / M)).